A 283-amino-acid chain; its full sequence is Plasma membrane ascorbate-dependent reductase CYBRD1 (283 aa).

Topologically, residues 1–5 are cytoplasmic; it reads MEGYK. A helical transmembrane segment spans residues 6 to 30; the sequence is SFLVFLVSSLLLGFLGVIFTLVWVL. The Cytochrome b561 domain maps to 13–218; sequence SSLLLGFLGV…FGGLVVWMVT (206 aa). The Extracellular segment spans residues 31–45; sequence HWREGLGWDGGAAEF. A helical transmembrane segment spans residues 46 to 67; the sequence is NWHPVLVTSGFIFIQGIAIIVY. Heme b-binding residues include histidine 48, arginine 68, and lysine 77. Over 68 to 76 the chain is Cytoplasmic; the sequence is RLPWTWNCS. L-ascorbate contacts are provided by lysine 77 and lysine 81. The chain crosses the membrane as a helical span at residues 77–103; that stretch reads KLLMKFIHAGLHLTAFVFTIVALVAVF. Residue histidine 84 participates in heme b binding. The Extracellular segment spans residues 104–116; the sequence is DFHNAKNIPNMYS. Histidine 106 provides a ligand contact to Fe(3+). Heme b-binding positions include 113–116 and histidine 118; that span reads NMYS. The chain crosses the membrane as a helical span at residues 117-142; the sequence is LHSWIGLTVVILYALQLVLGVSIYLL. Residues 143–149 are Cytoplasmic-facing; the sequence is PFARDTL. An L-ascorbate-binding site is contributed by arginine 150. Residues 150–177 form a helical membrane-spanning segment; the sequence is RAALMPVHVYSGLLIFGTVIATALMGIT. Residues histidine 157 and glutamate 178 each contribute to the heme b site. The Extracellular segment spans residues 178-195; sequence EKLIFSLKEPPYSKMPPE. A helical membrane pass occupies residues 196-220; that stretch reads AIFVNTFGLIILVFGGLVVWMVTTP. Topologically, residues 221–283 are cytoplasmic; that stretch reads AWKRPREQEI…LDDAGQRSTM (63 aa). Lysine 223 contacts heme b. A disordered region spans residues 234–263; it reads NPTVSSPDGTEEGSTITDCSNTEKSDVELN. The span at 235–253 shows a compositional bias: polar residues; the sequence is PTVSSPDGTEEGSTITDCS. Positions 254-263 are enriched in basic and acidic residues; that stretch reads NTEKSDVELN.

As to quaternary structure, homodimer. Heme b is required as a cofactor.

Its subcellular location is the cell membrane. The protein localises to the apical cell membrane. The catalysed reaction is Fe(3+)(out) + L-ascorbate(in) = monodehydro-L-ascorbate radical(in) + Fe(2+)(out) + H(+). It catalyses the reaction Cu(2+)(out) + L-ascorbate(in) = Cu(+)(out) + monodehydro-L-ascorbate radical(in) + H(+). It carries out the reaction monodehydro-L-ascorbate radical(out) + L-ascorbate(in) = monodehydro-L-ascorbate radical(in) + L-ascorbate(out). In terms of biological role, plasma membrane reductase that uses cytoplasmic ascorbate as an electron donor to reduce extracellular Fe(3+) into Fe(2+). It is also able to reduce extracellular monodehydro-L-ascorbate and may be involved in extracellular ascorbate regeneration. May also function as a cupric transmembrane reductase. This Xenopus tropicalis (Western clawed frog) protein is Plasma membrane ascorbate-dependent reductase CYBRD1 (cybrd1).